The following is a 360-amino-acid chain: Malonyl CoA-acyl carrier protein transacylase, mitochondrial (360 aa).

The transit peptide at 1-24 (MKLLTFPGQGTSISISILKAIIRN) directs the protein to the mitochondrion. Catalysis depends on residues Ser-105 and His-235.

The protein belongs to the FabD family.

The protein resides in the mitochondrion. It carries out the reaction holo-[ACP] + malonyl-CoA = malonyl-[ACP] + CoA. Its pathway is lipid metabolism; fatty acid biosynthesis. In terms of biological role, involved in biosynthesis of fatty acids in mitochondria. This Saccharomyces cerevisiae (strain ATCC 204508 / S288c) (Baker's yeast) protein is Malonyl CoA-acyl carrier protein transacylase, mitochondrial (MCT1).